The sequence spans 417 residues: Probable serpin E3 (417 aa).

Residues 1–24 (MPQLSASSLFICLWLVDLCHVANS) form the signal peptide. Residues Asn50, Asn106, Asn140, Asn147, and Asn152 are each glycosylated (N-linked (GlcNAc...) asparagine).

The protein belongs to the serpin family.

It is found in the secreted. Functionally, probable serine protease inhibitor. The protein is Probable serpin E3 (serpine3) of Danio rerio (Zebrafish).